An 86-amino-acid polypeptide reads, in one-letter code: Putative membrane protein insertion efficiency factor (86 aa).

The segment at 66 to 86 (PLHEGGDDPVPPRKNDDNREN) is disordered.

This sequence belongs to the UPF0161 family.

It is found in the cell inner membrane. Functionally, could be involved in insertion of integral membrane proteins into the membrane. This Proteus mirabilis (strain HI4320) protein is Putative membrane protein insertion efficiency factor.